Reading from the N-terminus, the 1230-residue chain is SAM and SH3 domain-containing protein 1 (1230 aa).

Positions 1–10 are enriched in low complexity; it reads MEEDAGAASP. Positions 1–30 are disordered; the sequence is MEEDAGAASPAPEPEPEVDPARELEPEAGV. S83 and S241 each carry phosphoserine. Disordered regions lie at residues 211–249 and 275–337; these read RQSSTLDPADWPDGSYPTLDGSSTCNSREQSDDETEDSV and KKPS…LDTW. Residues 275–297 are compositionally biased toward basic and acidic residues; it reads KKPSAEGGEEHVFENSPVQDERS. Over residues 324-336 the composition is skewed to low complexity; the sequence is SLTPSPSSSSLDT. S400 bears the Phosphoserine mark. Disordered regions lie at residues 439 to 566, 610 to 633, and 705 to 792; these read PRIS…YDTD, EEKPKRPTRRRKKGRPSQPKSVED, and VDNQ…KSCD. Polar residues predominate over residues 461–470; it reads KYSSPVSEQD. Basic and acidic residues predominate over residues 485 to 494; it reads PDSEHVDKPK. Low complexity predominate over residues 498 to 516; that stretch reads GGSVESLRSSLSGQSSMSG. Polar residues predominate over residues 517–529; that stretch reads QTVSTTDSSTSNR. The SH3 domain occupies 547 to 608; it reads PFCGRARVHT…KFIYVDVLNE (62 aa). Positions 615–624 are enriched in basic residues; the sequence is RPTRRRKKGR. The SAM 1 domain occupies 626 to 690; the sequence is SQPKSVEDLL…LTAVELLQEY (65 aa). The segment covering 737-758 has biased composition (polar residues); it reads VLSTKSSTESNLKSFTRSQPGN. Basic and acidic residues predominate over residues 768-779; it reads GEVRKQGEEGRL. S813 and S831 each carry phosphoserine. Disordered stretches follow at residues 818–875 and 915–1045; these read EGPE…LPRG and PPQC…PWLA. The tract at residues 844-852 is required for interaction with TRAF6; that stretch reads NVPTEMPET. Residues 852–868 show a composition bias toward polar residues; the sequence is TCSQNVPEVPQKTSACT. Over residues 940–956 the composition is skewed to basic and acidic residues; that stretch reads GLRKGHDHHPLGTKEGV. Residues 962–972 are compositionally biased toward polar residues; it reads APETRTQSRHP. The span at 1008 to 1019 shows a compositional bias: low complexity; it reads SPASPVSPSDCP. In terms of domain architecture, SAM 2 spans 1160–1224; the sequence is GCVASMSDWL…ITAARLFKLP (65 aa).

Interacts with GNAS. Interacts with IQGAP1. Interacts with TRAF6 (via C-terminus); the interaction is LPS-dependent. Interacts with MAP3K7, CHUK and IKBKB. Expressed in the microvascular endothelium of various organs, as well as in parenchymal cells. Expressed in the endothelium but not lymphoid cells of spleen and thymus.

The protein localises to the cytoplasm. Functionally, is a positive regulator of NF-kappa-B signaling downstream of TLR4 activation. It acts as a scaffold molecule to assemble a molecular complex that includes TRAF6, MAP3K7, CHUK and IKBKB, thereby facilitating NF-kappa-B signaling activation. Regulates TRAF6 and MAP3K7 ubiquitination. Involved in the regulation of cell mobility. Regulates lipolysaccharide (LPS)-induced endothelial cell migration. Is involved in the regulation of skin pigmentation through the control of melanocyte migration in the epidermis. The protein is SAM and SH3 domain-containing protein 1 (Sash1) of Mus musculus (Mouse).